The primary structure comprises 239 residues: 1-(5-phosphoribosyl)-5-[(5-phosphoribosylamino)methylideneamino] imidazole-4-carboxamide isomerase (239 aa).

Asp-8 serves as the catalytic Proton acceptor. Catalysis depends on Asp-129, which acts as the Proton donor.

This sequence belongs to the HisA/HisF family.

The protein localises to the cytoplasm. The enzyme catalyses 1-(5-phospho-beta-D-ribosyl)-5-[(5-phospho-beta-D-ribosylamino)methylideneamino]imidazole-4-carboxamide = 5-[(5-phospho-1-deoxy-D-ribulos-1-ylimino)methylamino]-1-(5-phospho-beta-D-ribosyl)imidazole-4-carboxamide. It functions in the pathway amino-acid biosynthesis; L-histidine biosynthesis; L-histidine from 5-phospho-alpha-D-ribose 1-diphosphate: step 4/9. The sequence is that of 1-(5-phosphoribosyl)-5-[(5-phosphoribosylamino)methylideneamino] imidazole-4-carboxamide isomerase from Bacillus thuringiensis subsp. konkukian (strain 97-27).